A 179-amino-acid polypeptide reads, in one-letter code: Large ribosomal subunit protein uL5 (179 aa).

Belongs to the universal ribosomal protein uL5 family. Part of the 50S ribosomal subunit; part of the 5S rRNA/L5/L18/L25 subcomplex. Contacts the 5S rRNA and the P site tRNA. Forms a bridge to the 30S subunit in the 70S ribosome.

Functionally, this is one of the proteins that bind and probably mediate the attachment of the 5S RNA into the large ribosomal subunit, where it forms part of the central protuberance. In the 70S ribosome it contacts protein S13 of the 30S subunit (bridge B1b), connecting the 2 subunits; this bridge is implicated in subunit movement. Contacts the P site tRNA; the 5S rRNA and some of its associated proteins might help stabilize positioning of ribosome-bound tRNAs. The protein is Large ribosomal subunit protein uL5 of Francisella tularensis subsp. novicida (strain U112).